Consider the following 221-residue polypeptide: GTP-binding nuclear protein Ran2 (221 aa).

The Small GTPase Ran-type domain occupies 10–174 (DYPSFKLVIV…LYLARKLAGD (165 aa)). GTP is bound at residue 21–28 (DGGTGKTT). The segment at 40-48 (KKYEPTIGV) is switch-I. Residues Gly-71, 125 to 128 (NKVD), and 153 to 155 (SAK) contribute to the GTP site. The tract at residues 71–87 (GQEKFGGLRDGYYIHGQ) is switch-II.

Belongs to the small GTPase superfamily. Ran family. In terms of assembly, found in a nuclear export complex with RanGTP, exportin and pre-miRNA.

The protein localises to the nucleus. In terms of biological role, GTP-binding protein involved in nucleocytoplasmic transport. Required for the import of protein into the nucleus and also for RNA export. Involved in chromatin condensation and control of cell cycle. The sequence is that of GTP-binding nuclear protein Ran2 (RAN2) from Solanum lycopersicum (Tomato).